A 388-amino-acid chain; its full sequence is Succinate--CoA ligase [ADP-forming] subunit beta (388 aa).

The ATP-grasp domain occupies 9-245; the sequence is KELLASYGLP…KSQENERELK (237 aa). ATP contacts are provided by residues Lys-46, 53–55, Glu-100, Tyr-103, and Glu-108; that span reads GRG. Mg(2+) contacts are provided by Asn-200 and Asp-214. Residues Asn-265 and 322–324 contribute to the substrate site; that span reads GIV.

Belongs to the succinate/malate CoA ligase beta subunit family. As to quaternary structure, heterotetramer of two alpha and two beta subunits. It depends on Mg(2+) as a cofactor.

The catalysed reaction is succinate + ATP + CoA = succinyl-CoA + ADP + phosphate. It catalyses the reaction GTP + succinate + CoA = succinyl-CoA + GDP + phosphate. It participates in carbohydrate metabolism; tricarboxylic acid cycle; succinate from succinyl-CoA (ligase route): step 1/1. Its function is as follows. Succinyl-CoA synthetase functions in the citric acid cycle (TCA), coupling the hydrolysis of succinyl-CoA to the synthesis of either ATP or GTP and thus represents the only step of substrate-level phosphorylation in the TCA. The beta subunit provides nucleotide specificity of the enzyme and binds the substrate succinate, while the binding sites for coenzyme A and phosphate are found in the alpha subunit. The polypeptide is Succinate--CoA ligase [ADP-forming] subunit beta (Neisseria gonorrhoeae (strain ATCC 700825 / FA 1090)).